The chain runs to 279 residues: Putative pyruvate, phosphate dikinase regulatory protein (279 aa).

Residue 153-160 (GVSRTSKT) participates in ADP binding.

Belongs to the pyruvate, phosphate/water dikinase regulatory protein family. PDRP subfamily.

The catalysed reaction is N(tele)-phospho-L-histidyl/L-threonyl-[pyruvate, phosphate dikinase] + ADP = N(tele)-phospho-L-histidyl/O-phospho-L-threonyl-[pyruvate, phosphate dikinase] + AMP + H(+). It carries out the reaction N(tele)-phospho-L-histidyl/O-phospho-L-threonyl-[pyruvate, phosphate dikinase] + phosphate + H(+) = N(tele)-phospho-L-histidyl/L-threonyl-[pyruvate, phosphate dikinase] + diphosphate. In terms of biological role, bifunctional serine/threonine kinase and phosphorylase involved in the regulation of the pyruvate, phosphate dikinase (PPDK) by catalyzing its phosphorylation/dephosphorylation. This chain is Putative pyruvate, phosphate dikinase regulatory protein, found in Rhodopseudomonas palustris (strain BisA53).